Consider the following 387-residue polypeptide: Ferrochelatase (387 aa).

Residues His196 and Glu277 each contribute to the Fe cation site.

It belongs to the ferrochelatase family.

Its subcellular location is the cytoplasm. The enzyme catalyses heme b + 2 H(+) = protoporphyrin IX + Fe(2+). It participates in porphyrin-containing compound metabolism; protoheme biosynthesis; protoheme from protoporphyrin-IX: step 1/1. Functionally, catalyzes the ferrous insertion into protoporphyrin IX. In Rippkaea orientalis (strain PCC 8801 / RF-1) (Cyanothece sp. (strain PCC 8801)), this protein is Ferrochelatase.